The sequence spans 184 residues: MGIEEKAPSGFMLAKVSDLVGLIRKSSLWPVTMGLACCAIEMMATGTPRFDISRFGMEVFRASPRQADLMIVSGRVSQKMAPVVRQVYDQMSEPKWVLSMGVCASSGGMFNNYAVVQGVDHILPVDIYLPGCPPRPEMLLNAILELHEQIRSEPLGANRAEAARAVEAAALRATPTHEMTGLLA.

[4Fe-4S] cluster-binding residues include C37, C38, C103, and C132.

The protein belongs to the complex I 20 kDa subunit family. As to quaternary structure, NDH-1 is composed of 14 different subunits. Subunits NuoB, C, D, E, F, and G constitute the peripheral sector of the complex. Requires [4Fe-4S] cluster as cofactor.

The protein localises to the cell membrane. It catalyses the reaction a quinone + NADH + 5 H(+)(in) = a quinol + NAD(+) + 4 H(+)(out). Functionally, NDH-1 shuttles electrons from NADH, via FMN and iron-sulfur (Fe-S) centers, to quinones in the respiratory chain. The immediate electron acceptor for the enzyme in this species is believed to be a menaquinone. Couples the redox reaction to proton translocation (for every two electrons transferred, four hydrogen ions are translocated across the cytoplasmic membrane), and thus conserves the redox energy in a proton gradient. The protein is NADH-quinone oxidoreductase subunit B of Beutenbergia cavernae (strain ATCC BAA-8 / DSM 12333 / CCUG 43141 / JCM 11478 / NBRC 16432 / NCIMB 13614 / HKI 0122).